An 88-amino-acid chain; its full sequence is Large ribosomal subunit protein bL27 (88 aa).

The segment at 1–24 (MAHKKAGGSSRNGRDSAGQRRGVK) is disordered.

Belongs to the bacterial ribosomal protein bL27 family.

The sequence is that of Large ribosomal subunit protein bL27 from Syntrophobacter fumaroxidans (strain DSM 10017 / MPOB).